The chain runs to 144 residues: Gas vesicle protein A1 (144 aa).

The segment at 72 to 144 (EAGPRKDPGL…APSRRKEEQE (73 aa)) is disordered. Over residues 113-127 (KQARDDGGSERETSS) the composition is skewed to basic and acidic residues.

The protein belongs to the gas vesicle GvpA family. In terms of assembly, the gas vesicle shell is 2 nm thick and consists of a single layer of this protein. It forms helical ribs nearly perpendicular to the long axis of the vesicle.

Its subcellular location is the gas vesicle shell. In terms of biological role, gas vesicles are hollow, gas filled proteinaceous nanostructures found in some microorganisms. During planktonic growth they allow positioning of the organism at a favorable depth for light or nutrient acquisition. GvpA forms the protein shell. It is not clear what function GVs perform in soil bacteria. In Streptomyces coelicolor (strain ATCC BAA-471 / A3(2) / M145), this protein is Gas vesicle protein A1.